Reading from the N-terminus, the 320-residue chain is Lipoyl synthase (320 aa).

The segment at 1–29 is disordered; the sequence is MVTVVDRVTNRRLRHPEKAHRPDTSVQKK. The segment covering 19–29 has biased composition (basic and acidic residues); that stretch reads AHRPDTSVQKK. [4Fe-4S] cluster is bound by residues Cys-59, Cys-64, Cys-70, Cys-85, Cys-89, Cys-92, and Ser-298. Residues 71–287 form the Radical SAM core domain; the sequence is WSQRHASFMI…AKIGKVKGFL (217 aa).

Belongs to the radical SAM superfamily. Lipoyl synthase family. [4Fe-4S] cluster is required as a cofactor.

It localises to the cytoplasm. The enzyme catalyses [[Fe-S] cluster scaffold protein carrying a second [4Fe-4S](2+) cluster] + N(6)-octanoyl-L-lysyl-[protein] + 2 oxidized [2Fe-2S]-[ferredoxin] + 2 S-adenosyl-L-methionine + 4 H(+) = [[Fe-S] cluster scaffold protein] + N(6)-[(R)-dihydrolipoyl]-L-lysyl-[protein] + 4 Fe(3+) + 2 hydrogen sulfide + 2 5'-deoxyadenosine + 2 L-methionine + 2 reduced [2Fe-2S]-[ferredoxin]. It participates in protein modification; protein lipoylation via endogenous pathway; protein N(6)-(lipoyl)lysine from octanoyl-[acyl-carrier-protein]: step 2/2. In terms of biological role, catalyzes the radical-mediated insertion of two sulfur atoms into the C-6 and C-8 positions of the octanoyl moiety bound to the lipoyl domains of lipoate-dependent enzymes, thereby converting the octanoylated domains into lipoylated derivatives. This is Lipoyl synthase from Bartonella tribocorum (strain CIP 105476 / IBS 506).